A 277-amino-acid polypeptide reads, in one-letter code: Exosome complex component Rrp42 (277 aa).

The protein belongs to the RNase PH family. Rrp42 subfamily. Component of the archaeal exosome complex. Forms a hexameric ring-like arrangement composed of 3 Rrp41-Rrp42 heterodimers. The hexameric ring associates with a trimer of Rrp4 and/or Csl4 subunits.

The protein localises to the cytoplasm. In terms of biological role, non-catalytic component of the exosome, which is a complex involved in RNA degradation. Contributes to the structuring of the Rrp41 active site. In Pyrococcus furiosus (strain ATCC 43587 / DSM 3638 / JCM 8422 / Vc1), this protein is Exosome complex component Rrp42.